The primary structure comprises 371 residues: Ribosomal RNA small subunit methyltransferase H (371 aa).

S-adenosyl-L-methionine is bound by residues 43 to 45, Asp-62, Leu-96, Asp-110, and Gln-117; that span reads GGH. The interval 315-371 is disordered; that stretch reads AAERLDPTQQQRQRTDRERYRRQVRAMHQPGTGSAVRRPVSGDDGTGTDEEGEGHDD. Positions 360–371 are enriched in acidic residues; that stretch reads TGTDEEGEGHDD.

This sequence belongs to the methyltransferase superfamily. RsmH family.

The protein localises to the cytoplasm. The catalysed reaction is cytidine(1402) in 16S rRNA + S-adenosyl-L-methionine = N(4)-methylcytidine(1402) in 16S rRNA + S-adenosyl-L-homocysteine + H(+). In terms of biological role, specifically methylates the N4 position of cytidine in position 1402 (C1402) of 16S rRNA. This Salinispora tropica (strain ATCC BAA-916 / DSM 44818 / JCM 13857 / NBRC 105044 / CNB-440) protein is Ribosomal RNA small subunit methyltransferase H.